We begin with the raw amino-acid sequence, 37 residues long: Mu-agatoxin-Aa1b (37 aa).

4 disulfide bridges follow: cysteine 2–cysteine 18, cysteine 9–cysteine 23, cysteine 17–cysteine 33, and cysteine 25–cysteine 31. Serine 37 carries the post-translational modification Serine amide.

It belongs to the neurotoxin 07 (Beta/delta-agtx) family. 01 (aga-2) subfamily. As to expression, expressed by the venom gland.

The protein resides in the secreted. Its function is as follows. Insecticidal neurotoxin that induces an irreversible spastic paralysis when injected into insects. Modifies presynaptic voltage-gated sodium channels (Nav), causing them to open at the normal resting potential of the nerve. This leads to spontaneous release of neurotransmitter and repetitive action potentials in motor neurons. In Agelenopsis aperta (North American funnel-web spider), this protein is Mu-agatoxin-Aa1b.